Reading from the N-terminus, the 1068-residue chain is Putative protein TIC 214 N-terminal part (1068 aa).

6 consecutive transmembrane segments (helical) span residues 11 to 31 (VLWV…LFGI), 68 to 88 (ITGQ…VLLI), 92 to 112 (LLTL…KDLI), 131 to 151 (IFFD…SPVL), 166 to 186 (FIFL…FVSL), and 213 to 233 (FSII…VPFI).

It belongs to the TIC214 family. As to quaternary structure, part of the Tic complex.

It is found in the plastid. The protein localises to the chloroplast inner membrane. Involved in protein precursor import into chloroplasts. May be part of an intermediate translocation complex acting as a protein-conducting channel at the inner envelope. The chain is Putative protein TIC 214 N-terminal part from Marchantia polymorpha (Common liverwort).